A 142-amino-acid chain; its full sequence is HTH-type transcriptional regulator MntR (142 aa).

Positions Met-1 to Thr-63 constitute an HTH dtxR-type domain. The Mn(2+) site is built by Asp-8, Glu-11, His-77, Glu-99, Glu-102, and His-103.

This sequence belongs to the DtxR/MntR family. As to quaternary structure, homodimer.

It localises to the cytoplasm. DNA binding is strongly activated by Mn(2+). In terms of biological role, central regulator of manganese homeostasis. This Listeria monocytogenes serotype 4b (strain CLIP80459) protein is HTH-type transcriptional regulator MntR.